Here is a 1237-residue protein sequence, read N- to C-terminus: Rho guanine nucleotide exchange factor 10-like protein (1237 aa).

2 disordered regions span residues 1–117 (MASS…SSRR) and 132–203 (YDDV…QPKM). The segment covering 25–45 (EAEDDPGEGFEFDDSDDDEDT) has biased composition (acidic residues). S39 is modified (phosphoserine). Residues Y132 and Y153 each carry the phosphotyrosine modification. 2 stretches are compositionally biased toward basic and acidic residues: residues 146-163 (EAER…RAPQ) and 184-194 (EEAKPEAEPTK). S241 carries the post-translational modification Phosphoserine. Residues 276–463 (VRRHILGSIV…ETLAEKLNEQ (188 aa)) form the DH domain. Disordered stretches follow at residues 1091–1118 (QEEA…PASH) and 1142–1164 (PGPL…HSEE).

Interacts with RHOA, RHOB and RHOC.

The protein localises to the cytoplasm. Acts as a guanine nucleotide exchange factor (GEF) for RHOA, RHOB and RHOC. The sequence is that of Rho guanine nucleotide exchange factor 10-like protein (ARHGEF10L) from Bos taurus (Bovine).